The primary structure comprises 493 residues: Glutathione hydrolase 6 (493 aa).

Residues 1 to 54 (MERAEEPVVYQKLLPWEPSLESEEEVEEEETSEALVLNPRRHQDSSRNKAGGLP) lie on the Cytoplasmic side of the membrane. The tract at residues 19–52 (SLESEEEVEEEETSEALVLNPRRHQDSSRNKAGG) is disordered. Positions 20–32 (LESEEEVEEEETS) are enriched in acidic residues. Residues 55 to 75 (GTWARVVAALLLLAVGCSLAV) traverse the membrane as a helical; Signal-anchor for type II membrane protein segment. Residues 76-493 (RQLQNQGRST…PHACCPFQGF (418 aa)) are Extracellular-facing. The segment at 83–105 (RSTGSLGSVAPPPGGHSHGPGVY) is disordered. N-linked (GlcNAc...) asparagine glycosylation is found at asparagine 161 and asparagine 370. Residues 442-455 (PPTQAQHQHQGQQE) are compositionally biased toward low complexity. The tract at residues 442–464 (PPTQAQHQHQGQQEPTEHPSTCG) is disordered.

Belongs to the gamma-glutamyltransferase family. Heterodimer composed of the light and heavy chains. The active site is located in the light chain. Post-translationally, cleaved by autocatalysis into a large and a small subunit and the autocatalytic cleavage is essential to the functional activation of the enzyme.

It localises to the membrane. It carries out the reaction an N-terminal (5-L-glutamyl)-[peptide] + an alpha-amino acid = 5-L-glutamyl amino acid + an N-terminal L-alpha-aminoacyl-[peptide]. The catalysed reaction is glutathione + H2O = L-cysteinylglycine + L-glutamate. It catalyses the reaction an S-substituted glutathione + H2O = an S-substituted L-cysteinylglycine + L-glutamate. The protein operates within sulfur metabolism; glutathione metabolism. Hydrolyzes and transfers gamma-glutamyl moieties from glutathione and other gamma-glutamyl compounds to acceptors. In Homo sapiens (Human), this protein is Glutathione hydrolase 6.